The following is a 152-amino-acid chain: Large ribosomal subunit protein bL9 (152 aa).

It belongs to the bacterial ribosomal protein bL9 family.

Its function is as follows. Binds to the 23S rRNA. The polypeptide is Large ribosomal subunit protein bL9 (Thermosynechococcus vestitus (strain NIES-2133 / IAM M-273 / BP-1)).